A 449-amino-acid polypeptide reads, in one-letter code: Exodeoxyribonuclease 7 large subunit (449 aa).

It belongs to the XseA family. As to quaternary structure, heterooligomer composed of large and small subunits.

The protein resides in the cytoplasm. It catalyses the reaction Exonucleolytic cleavage in either 5'- to 3'- or 3'- to 5'-direction to yield nucleoside 5'-phosphates.. In terms of biological role, bidirectionally degrades single-stranded DNA into large acid-insoluble oligonucleotides, which are then degraded further into small acid-soluble oligonucleotides. The chain is Exodeoxyribonuclease 7 large subunit from Salmonella schwarzengrund (strain CVM19633).